Here is a 628-residue protein sequence, read N- to C-terminus: Very-long-chain aldehyde decarbonylase GL1-2 (628 aa).

Transmembrane regions (helical) follow at residues 37 to 57 (GAAP…ARGL), 131 to 151 (GWAI…YWAH), 191 to 211 (VVIG…VGLV), 299 to 319 (DFVF…PFVL), and 331 to 351 (FVLL…WCCS). Residues 137–277 (LLHVLVAEPL…MPIFDLLGGT (141 aa)) form the Fatty acid hydroxylase domain.

This sequence belongs to the sterol desaturase family. As to quaternary structure, homodimer.

Its subcellular location is the endoplasmic reticulum membrane. The enzyme catalyses a long-chain fatty aldehyde + 2 NADPH + O2 + H(+) = a long-chain alkane + formate + 2 NADP(+) + H2O. In terms of biological role, aldehyde decarbonylase involved in the conversion of aldehydes to alkanes. Core component of a very-long-chain alkane synthesis complex. The sequence is that of Very-long-chain aldehyde decarbonylase GL1-2 from Oryza sativa subsp. indica (Rice).